The primary structure comprises 234 residues: Two-component response regulator ARR9 (234 aa).

Positions histidine 10–methionine 147 constitute a Response regulatory domain. Aspartate 80 is modified (4-aspartylphosphate).

Belongs to the ARR family. Type-A subfamily. In terms of assembly, interacts with AHP1 and AHP3. In terms of processing, two-component system major event consists of a His-to-Asp phosphorelay between a sensor histidine kinase (HK) and a response regulator (RR). In plants, the His-to-Asp phosphorelay involves an additional intermediate named Histidine-containing phosphotransfer protein (HPt). This multistep phosphorelay consists of a His-Asp-His-Asp sequential transfer of a phosphate group between first a His and an Asp of the HK protein, followed by the transfer to a conserved His of the HPt protein and finally the transfer to an Asp in the receiver domain of the RR protein. In terms of tissue distribution, predominantly expressed in roots.

It is found in the nucleus. Its function is as follows. Functions as a response regulator involved in His-to-Asp phosphorelay signal transduction system. Phosphorylation of the Asp residue in the receiver domain activates the ability of the protein to promote the transcription of target genes. Type-A response regulators seem to act as negative regulators of the cytokinin signaling. This chain is Two-component response regulator ARR9 (ARR9), found in Arabidopsis thaliana (Mouse-ear cress).